We begin with the raw amino-acid sequence, 67 residues long: Large ribosomal subunit protein uL29 (67 aa).

Belongs to the universal ribosomal protein uL29 family.

This is Large ribosomal subunit protein uL29 from Desulforudis audaxviator (strain MP104C).